Reading from the N-terminus, the 599-residue chain is Elongation factor 4 (599 aa).

A tr-type G domain is found at 5-187; the sequence is NRIRNFSIVA…AIVTRLPAPK (183 aa). Residues 17–22 and 134–137 contribute to the GTP site; these read DHGKST and NKVD.

Belongs to the TRAFAC class translation factor GTPase superfamily. Classic translation factor GTPase family. LepA subfamily.

The protein resides in the cell inner membrane. It carries out the reaction GTP + H2O = GDP + phosphate + H(+). In terms of biological role, required for accurate and efficient protein synthesis under certain stress conditions. May act as a fidelity factor of the translation reaction, by catalyzing a one-codon backward translocation of tRNAs on improperly translocated ribosomes. Back-translocation proceeds from a post-translocation (POST) complex to a pre-translocation (PRE) complex, thus giving elongation factor G a second chance to translocate the tRNAs correctly. Binds to ribosomes in a GTP-dependent manner. This chain is Elongation factor 4, found in Jannaschia sp. (strain CCS1).